Consider the following 935-residue polypeptide: MANRLQRGDRSRLLLLLCIFLGTLRGFRARQIRYSVPEETEKGSFVGNISKDLGLEPRELAKRGVRIVSRGKTQLFAVNPRSGSLITAGRIDREELCETVSSCFLNMELLVEDTLKIYGVEVEIIDINDNAPSFQEDEVEIKVSEHAIPGARFALPNARDPDVGVNSLQSYQLSPNNYFSLQLRGRTDGAKNPELVLEGSLDREKEAAHLLLLTALDGGDPIRKGAVPIRVVVLDVNDHIPMFTQSVYRVSVPENISSGTRVLMVNATDPDEGINGEVMYSFRNMESKASEIFQLDSQTGEVQVRGSLDFEKYRFYEMEIQGQDGGGLFTTTTMLITVVDVNDNAPEITITSSINSILENSPPGTVIALLNVQDQDSGENGQVSCFIPNHLPFKLEKTYGNYYKLITSRVLDRELVQSYNITLTATDQGSPPLSAETHIWLNVADDNDNPPVFPHSSYSAYIPENNPRGASIFSVTALDPDSKQNALVTYSLTDDTVQGVPLSSYVSINSNTGVLYALQSFDYEQFRDLQLRVIARDSGDPPLSSNVSLSLFVLDQNDNAPEILYPALPTDGSTGVELAPRSAEPGYLVTKVVAVDKDSGQNAWLSYRLLKASEPGLFAVGEHTGEVRTARALLDRDALKQSLVVAVQDHGQPPLSATVTLTVAVADSIPEVLADLGSLESLANSEASDLSLYLVVAVAAVSCIFLVFVIVLLALRLWRWHKSRLLQASEGGLAGMPTSHFVGVDGVQAFLQTYSHEVSLIADSQKSHLIFPQPNYGDTLISQESCEKSEPLLIAEDSAIILGKCDPTSNQQAPPNTDWRFSQAQRPGTSGSQNGDDTGTWPNNQFDTEMLQAMILASASEAADGSSTLGGGAGTMGLSARYGPQFTLQHVPDYRQNVYIPGSNATLTNAAGKRDGKAPAGGNGNKKKSGKKEKK.

An N-terminal signal peptide occupies residues 1-29; the sequence is MANRLQRGDRSRLLLLLCIFLGTLRGFRA. Cadherin domains lie at 30 to 134, 135 to 243, 244 to 348, 349 to 453, 454 to 563, and 571 to 677; these read RQIR…APSF, QEDE…IPMF, TQSV…APEI, TITS…PPVF, PHSS…APEI, and DGST…ADLG. Over 30 to 693 the chain is Extracellular; sequence RQIRYSVPEE…NSEASDLSLY (664 aa). Asn48 carries N-linked (GlcNAc...) asparagine glycosylation. 4 N-linked (GlcNAc...) asparagine glycosylation sites follow: Asn255, Asn266, Asn420, and Asn546. The helical transmembrane segment at 694–714 threads the bilayer; that stretch reads LVVAVAAVSCIFLVFVIVLLA. The Cytoplasmic segment spans residues 715–935; that stretch reads LRLWRWHKSR…KKKSGKKEKK (221 aa). Disordered regions lie at residues 805–844 and 905–935; these read CDPTSNQQAPPNTDWRFSQAQRPGTSGSQNGDDTGTWPNN and ATLTNAAGKRDGKAPAGGNGNKKKSGKKEKK. Positions 807-844 are enriched in polar residues; the sequence is PTSNQQAPPNTDWRFSQAQRPGTSGSQNGDDTGTWPNN. Positions 925 to 935 are enriched in basic residues; the sequence is NKKKSGKKEKK.

It localises to the cell membrane. In terms of biological role, potential calcium-dependent cell-adhesion protein. May be involved in the establishment and maintenance of specific neuronal connections in the brain. The chain is Protocadherin gamma-A11 (PCDHGA11) from Pan troglodytes (Chimpanzee).